Consider the following 107-residue polypeptide: Iron-binding protein IscA (107 aa).

Cys-35, Cys-99, and Cys-101 together coordinate Fe cation.

The protein belongs to the HesB/IscA family. As to quaternary structure, homodimer; may form tetramers and higher multimers. Requires Fe cation as cofactor.

Is able to transfer iron-sulfur clusters to apo-ferredoxin. Multiple cycles of [2Fe2S] cluster formation and transfer are observed, suggesting that IscA acts catalytically. Recruits intracellular free iron so as to provide iron for the assembly of transient iron-sulfur cluster in IscU in the presence of IscS, L-cysteine and the thioredoxin reductase system TrxA/TrxB. The protein is Iron-binding protein IscA of Pectobacterium carotovorum subsp. carotovorum (strain PC1).